Reading from the N-terminus, the 106-residue chain is Transcription initiation factor IIA subunit 2 (106 aa).

It belongs to the TFIIA subunit 2 family. TFIIA is a heterodimer of the large unprocessed subunit 1 and a small subunit gamma. It was originally believed to be a heterotrimer of an alpha, a beta and a gamma subunit.

Its subcellular location is the nucleus. Its function is as follows. TFIIA is a component of the transcription machinery of RNA polymerase II and plays an important role in transcriptional activation. TFIIA in a complex with TBP mediates transcriptional activity. Protein involved in the resistance to X.oryzae. The polypeptide is Transcription initiation factor IIA subunit 2 (TFIIAy) (Oryza sativa subsp. indica (Rice)).